A 651-amino-acid chain; its full sequence is DNA ligase (651 aa).

NAD(+) contacts are provided by residues 30–34, 79–80, and Glu105; these read DEEYD and SM. Catalysis depends on Lys107, which acts as the N6-AMP-lysine intermediate. The NAD(+) site is built by Arg128, Glu162, and Lys301. Zn(2+)-binding residues include Cys395, Cys398, Cys411, and Cys416. The BRCT domain maps to 570–651; that stretch reads ALNENISNKT…NALLGGDDEV (82 aa).

This sequence belongs to the NAD-dependent DNA ligase family. LigA subfamily. Mg(2+) serves as cofactor. The cofactor is Mn(2+).

The catalysed reaction is NAD(+) + (deoxyribonucleotide)n-3'-hydroxyl + 5'-phospho-(deoxyribonucleotide)m = (deoxyribonucleotide)n+m + AMP + beta-nicotinamide D-nucleotide.. Functionally, DNA ligase that catalyzes the formation of phosphodiester linkages between 5'-phosphoryl and 3'-hydroxyl groups in double-stranded DNA using NAD as a coenzyme and as the energy source for the reaction. It is essential for DNA replication and repair of damaged DNA. The sequence is that of DNA ligase from Campylobacter lari (strain RM2100 / D67 / ATCC BAA-1060).